The sequence spans 198 residues: Protein GrpE (198 aa).

The protein belongs to the GrpE family. Homodimer.

The protein localises to the cytoplasm. In terms of biological role, participates actively in the response to hyperosmotic and heat shock by preventing the aggregation of stress-denatured proteins, in association with DnaK and GrpE. It is the nucleotide exchange factor for DnaK and may function as a thermosensor. Unfolded proteins bind initially to DnaJ; upon interaction with the DnaJ-bound protein, DnaK hydrolyzes its bound ATP, resulting in the formation of a stable complex. GrpE releases ADP from DnaK; ATP binding to DnaK triggers the release of the substrate protein, thus completing the reaction cycle. Several rounds of ATP-dependent interactions between DnaJ, DnaK and GrpE are required for fully efficient folding. This is Protein GrpE from Vibrio harveyi (Beneckea harveyi).